A 151-amino-acid chain; its full sequence is 3-hydroxyacyl-[acyl-carrier-protein] dehydratase FabZ (151 aa).

Histidine 53 is a catalytic residue.

Belongs to the thioester dehydratase family. FabZ subfamily.

It is found in the cytoplasm. It carries out the reaction a (3R)-hydroxyacyl-[ACP] = a (2E)-enoyl-[ACP] + H2O. In terms of biological role, involved in unsaturated fatty acids biosynthesis. Catalyzes the dehydration of short chain beta-hydroxyacyl-ACPs and long chain saturated and unsaturated beta-hydroxyacyl-ACPs. The chain is 3-hydroxyacyl-[acyl-carrier-protein] dehydratase FabZ from Erythrobacter litoralis (strain HTCC2594).